We begin with the raw amino-acid sequence, 563 residues long: uncharacterized protein (563 aa).

The Cytoplasmic portion of the chain corresponds to 1-13 (MASRSCICQVSAG). The chain crosses the membrane as a helical span at residues 14 to 34 (IIFLIGAALLVAGLVIVLNVF). Over 35–528 (PNIVNNQIND…LFTPVSTVNT (494 aa)) the chain is Lumenal. Asn-43, Asn-112, Asn-133, Asn-188, Asn-265, Asn-295, Asn-315, and Asn-502 each carry an N-linked (GlcNAc...) asparagine glycan. A helical membrane pass occupies residues 529–549 (ICWIAVGLGAGLIALSIVMVI). Over 550–563 (VSFCCFRDEHHKTS) the chain is Cytoplasmic.

It belongs to the CD36 family.

The protein resides in the membrane. This is an uncharacterized protein from Caenorhabditis elegans.